A 773-amino-acid chain; its full sequence is Polyribonucleotide nucleotidyltransferase (773 aa).

D532 and D538 together coordinate Mg(2+). The KH domain maps to 598 to 657 (PRVITIKVPVDKIGEVIGPKGKVINAITEETGAQISIEDDGTVFVGATDGLSAQAAINKI). Positions 669 to 738 (GERFLGTVVK…KRGKISLVLV (70 aa)) constitute an S1 motif domain. The segment at 749–773 (APADAGAAQEFGSGTAPADAATASS) is disordered.

It belongs to the polyribonucleotide nucleotidyltransferase family. The cofactor is Mg(2+).

Its subcellular location is the cytoplasm. It carries out the reaction RNA(n+1) + phosphate = RNA(n) + a ribonucleoside 5'-diphosphate. Functionally, involved in mRNA degradation. Catalyzes the phosphorolysis of single-stranded polyribonucleotides processively in the 3'- to 5'-direction. This Mycobacterium leprae (strain Br4923) protein is Polyribonucleotide nucleotidyltransferase.